The sequence spans 1648 residues: Kinesin-like protein KIF14 (1648 aa).

Residues 1–27 are disordered; the sequence is MSLHSTHNRNNSGDILDIPSSQNSSSL. The segment at 1–356 is required for PRC1-binding; it reads MSLHSTHNRN…AGKDPLKVEN (356 aa). A phosphoserine mark is found at S12 and S272. A Phosphothreonine modification is found at T277. The residue at position 346 (S346) is a Phosphoserine. The required for microtubule-binding with high affinity stretch occupies residues 356–737; sequence NSQVTVAVRV…AAQRNSRNID (382 aa). Residues 358-701 form the Kinesin motor domain; it reads QVTVAVRVRP…LRYANQARLI (344 aa). Position 447–454 (447–454) interacts with ATP; it reads GQTGSGKS. A coiled-coil region spans residues 705–791; it reads AKVNEDMNAK…QETKELQKAG (87 aa). Residues 825-891 enclose the FHA domain; that stretch reads TTVGKYKPNS…LRHGDRVILG (67 aa). Positions 901 to 1648 are required for CIT-binding; that stretch reads PVEVQKGKRP…ECTPSRIQWV (748 aa). A Phosphothreonine modification is found at T915. The stretch at 922 to 1079 forms a coiled coil; that stretch reads KDFEFAKNEL…QNRNNRDKTF (158 aa). S937 and S1292 each carry phosphoserine. 2 coiled-coil regions span residues 1332 to 1348 and 1468 to 1500; these read TNIA…VKKL and ENIF…VNRA. The tract at residues 1600 to 1648 is disordered; sequence NTKEEHQQSKSSGIDGSKNKGVPKRVYELHGSSPAVSSEECTPSRIQWV. Polar residues predominate over residues 1633-1648; the sequence is PAVSSEECTPSRIQWV.

Belongs to the TRAFAC class myosin-kinesin ATPase superfamily. Kinesin family. In terms of assembly, directly interacts with PRC1 within a complex also containing KIF4A, KIF20A and KIF23; targets to the central spindle. Directly interacts with CIT depending on the activation state of the kinase (stronger interaction with the kinase-dead form); targets to the midbody. Interacts with ARRB2; the interaction is detected in the nucleus upon OR1D2 stimulation. Interacts with AKT1; the interaction is detected in the plasma membrane upon INS stimulation and promotes AKT1 phosphorylation. Interacts with SVIL; at midbody during cytokinesis. Interacts with RADIL (via PDZ domain); recruits RADIL to the microtubule network restricting RADIL from interaction with activated RAP1A.

It is found in the nucleus. It localises to the cytoplasm. The protein localises to the cytoskeleton. Its subcellular location is the spindle. The protein resides in the midbody. Functionally, microtubule motor protein that binds to microtubules with high affinity through each tubulin heterodimer and has an ATPase activity. Plays a role in many processes like cell division, cytokinesis and also in cell proliferation and apoptosis. During cytokinesis, targets to central spindle and midbody through its interaction with PRC1 and CIT respectively. Regulates cell growth through regulation of cell cycle progression and cytokinesis. During cell cycle progression acts through SCF-dependent proteasomal ubiquitin-dependent protein catabolic process which controls CDKN1B degradation, resulting in positive regulation of cyclins, including CCNE1, CCND1 and CCNB1. During late neurogenesis, regulates the cerebellar, cerebral cortex and olfactory bulb development through regulation of apoptosis, cell proliferation and cell division. Also is required for chromosome congression and alignment during mitotic cell cycle process. Regulates cell spreading, focal adhesion dynamics, and cell migration through its interaction with RADIL resulting in regulation of RAP1A-mediated inside-out integrin activation by tethering RADIL on microtubules. This Homo sapiens (Human) protein is Kinesin-like protein KIF14.